We begin with the raw amino-acid sequence, 186 residues long: Protein YABBY 2 (186 aa).

The C4-type zinc-finger motif lies at 17–44 (CNFCNTIFAVSVPSNSMLNIVTVRCGHC).

It belongs to the YABBY family. Expressed in leaf blades, leaf sheaths and flowers.

It localises to the nucleus. In Oryza sativa subsp. japonica (Rice), this protein is Protein YABBY 2 (YAB2).